Here is a 184-residue protein sequence, read N- to C-terminus: Protein DP71L (184 aa).

The segment covering 1-15 has biased composition (basic residues); it reads MSRRNKRSRRRRKKP. A disordered region spans residues 1 to 41; that stretch reads MSRRNKRSRRRRKKPLNTIQPGPSKPSAQDEPIKSVSHHSS. Important for host CHOP inhibition regions lie at residues 125 to 127 and 169 to 173; these read VYF and LSAVL.

The protein belongs to the asfivirus DP71L family. In terms of assembly, interacts (via C-terminus) with host PPP1CB.

Its function is as follows. Interacts with the host phosphatase PP1 catalytic subunit (PPP1CB) and recruits it to dephosphorylate EIF2S1/eIF2alpha and therefore restores the host translation that has been shut-down by the host. Also inhibits the EIF2S1/eIF2alpha-ATF4-DDIT3/CHOP pathway. The polypeptide is Protein DP71L (Ornithodoros (relapsing fever ticks)).